The chain runs to 407 residues: Multifunctional CCA protein (407 aa).

2 residues coordinate ATP: Gly8 and Arg11. The CTP site is built by Gly8 and Arg11. Residues Asp21 and Asp23 each coordinate Mg(2+). Arg91, Arg137, and Arg140 together coordinate ATP. CTP is bound by residues Arg91, Arg137, and Arg140. Positions 226–327 constitute an HD domain; it reads TGIHVMAVVD…VKLLERTDAL (102 aa).

It belongs to the tRNA nucleotidyltransferase/poly(A) polymerase family. Bacterial CCA-adding enzyme type 1 subfamily. In terms of assembly, monomer. Can also form homodimers and oligomers. It depends on Mg(2+) as a cofactor. Requires Ni(2+) as cofactor.

The catalysed reaction is a tRNA precursor + 2 CTP + ATP = a tRNA with a 3' CCA end + 3 diphosphate. It carries out the reaction a tRNA with a 3' CCA end + 2 CTP + ATP = a tRNA with a 3' CCACCA end + 3 diphosphate. Catalyzes the addition and repair of the essential 3'-terminal CCA sequence in tRNAs without using a nucleic acid template. Adds these three nucleotides in the order of C, C, and A to the tRNA nucleotide-73, using CTP and ATP as substrates and producing inorganic pyrophosphate. tRNA 3'-terminal CCA addition is required both for tRNA processing and repair. Also involved in tRNA surveillance by mediating tandem CCA addition to generate a CCACCA at the 3' terminus of unstable tRNAs. While stable tRNAs receive only 3'-terminal CCA, unstable tRNAs are marked with CCACCA and rapidly degraded. The chain is Multifunctional CCA protein from Aromatoleum aromaticum (strain DSM 19018 / LMG 30748 / EbN1) (Azoarcus sp. (strain EbN1)).